Reading from the N-terminus, the 474-residue chain is tRNA-2-methylthio-N(6)-dimethylallyladenosine synthase (474 aa).

In terms of domain architecture, MTTase N-terminal spans 3-120 (KKLHIKTWGC…LPEMINSVRG (118 aa)). Positions 12, 49, 83, 157, 161, and 164 each coordinate [4Fe-4S] cluster. In terms of domain architecture, Radical SAM core spans 143–375 (RAEGPTAFVS…QERINQQAMA (233 aa)). The 64-residue stretch at 378–441 (RRMLGTTQRI…PNSLRGKVVR (64 aa)) folds into the TRAM domain.

It belongs to the methylthiotransferase family. MiaB subfamily. Monomer. It depends on [4Fe-4S] cluster as a cofactor.

The protein localises to the cytoplasm. The catalysed reaction is N(6)-dimethylallyladenosine(37) in tRNA + (sulfur carrier)-SH + AH2 + 2 S-adenosyl-L-methionine = 2-methylsulfanyl-N(6)-dimethylallyladenosine(37) in tRNA + (sulfur carrier)-H + 5'-deoxyadenosine + L-methionine + A + S-adenosyl-L-homocysteine + 2 H(+). Catalyzes the methylthiolation of N6-(dimethylallyl)adenosine (i(6)A), leading to the formation of 2-methylthio-N6-(dimethylallyl)adenosine (ms(2)i(6)A) at position 37 in tRNAs that read codons beginning with uridine. The polypeptide is tRNA-2-methylthio-N(6)-dimethylallyladenosine synthase (Shigella boydii serotype 18 (strain CDC 3083-94 / BS512)).